The chain runs to 307 residues: Aspartate carbamoyltransferase catalytic subunit (307 aa).

Carbamoyl phosphate is bound by residues arginine 54 and threonine 55. Lysine 83 provides a ligand contact to L-aspartate. 3 residues coordinate carbamoyl phosphate: arginine 104, histidine 132, and glutamine 135. The L-aspartate site is built by arginine 165 and arginine 228. Positions 267 and 268 each coordinate carbamoyl phosphate.

The protein belongs to the aspartate/ornithine carbamoyltransferase superfamily. ATCase family. In terms of assembly, heterododecamer (2C3:3R2) of six catalytic PyrB chains organized as two trimers (C3), and six regulatory PyrI chains organized as three dimers (R2).

It catalyses the reaction carbamoyl phosphate + L-aspartate = N-carbamoyl-L-aspartate + phosphate + H(+). Its pathway is pyrimidine metabolism; UMP biosynthesis via de novo pathway; (S)-dihydroorotate from bicarbonate: step 2/3. Catalyzes the condensation of carbamoyl phosphate and aspartate to form carbamoyl aspartate and inorganic phosphate, the committed step in the de novo pyrimidine nucleotide biosynthesis pathway. This chain is Aspartate carbamoyltransferase catalytic subunit, found in Clostridium botulinum (strain ATCC 19397 / Type A).